The chain runs to 428 residues: Trigger factor (428 aa).

Residues 165 to 240 form the PPIase FKBP-type domain; that stretch reads ADLIKLDAEG…VKEVKRMELP (76 aa).

This sequence belongs to the FKBP-type PPIase family. Tig subfamily.

It localises to the cytoplasm. It carries out the reaction [protein]-peptidylproline (omega=180) = [protein]-peptidylproline (omega=0). In terms of biological role, involved in protein export. Acts as a chaperone by maintaining the newly synthesized protein in an open conformation. Functions as a peptidyl-prolyl cis-trans isomerase. This is Trigger factor from Prosthecochloris aestuarii (strain DSM 271 / SK 413).